A 2521-amino-acid polypeptide reads, in one-letter code: Partially reducing polyketide synthase tpeA (2521 aa).

Residues 7-434 (DQSIAVIGLS…GSNAHAIIDN (428 aa)) form the Ketosynthase family 3 (KS3) domain. The segment at 47-66 (RWNSRRFQDDKNHSQNTSRT) is disordered. Active-site for beta-ketoacyl synthase activity residues include Cys180, His315, and His357. Residues 554-855 (YVFTGQGAQW…LRGPVTQILQ (302 aa)) form the Malonyl-CoA:ACP transacylase (MAT) domain. An N-terminal hotdog fold region spans residues 948–1088 (SSFIGLPMPS…GLVTVEFEQL (141 aa)). One can recognise a PKS/mFAS DH domain in the interval 948–1258 (SSFIGLPMPS…CVEMPSTAGV (311 aa)). The dehydratase (DH) domain stretch occupies residues 949 to 1256 (SFIGLPMPSF…LTCVEMPSTA (308 aa)). The C-terminal hotdog fold stretch occupies residues 1100-1258 (TTVQQAEAFY…CVEMPSTAGV (159 aa)). The Enoyl reductase (ER) domain occupies 1809 to 2121 (GMLNTLCFQA…DNRHHGKITL (313 aa)). The region spanning 2146 to 2323 (TYLIAGGLGG…AVTIDLGIVK (178 aa)) is the Ketoreductase (KR) domain. The 78-residue stretch at 2433 to 2510 (DAVLFVTGAV…SFARDLVGKG (78 aa)) folds into the Carrier domain. Position 2470 is an O-(pantetheine 4'-phosphoryl)serine (Ser2470).

Pantetheine 4'-phosphate is required as a cofactor.

Its pathway is secondary metabolite biosynthesis. Its function is as follows. Partially reducing polyketide synthase; part of the gene cluster that mediates the biosynthesis of polyesters containing 2,4-dihydroxy-6-(2-hydroxypropyl)benzoate and 3-hydroxybutyrate moieties, such as talapolyester G, 15G256beta and 15G256beta-2; as well as to oxidized derivatives such as 15G256alpha. The biosynthesis of the polyesters probably starts with the formation of the diketide 3-hydroxybutyryl-S-ACP catalyzed by the partially reducing polyketide synthase tpeA. The acceptance of 3-hydroxybutyryl by the non-reducing polyketide synthase tpeB would initiate further elongation and cyclization, catalyzed by KS and PT, respectively, to form 2,4-dihydroxy-6-(2-hydroxyn-propyl)benzoyl-S-ACP intermediate. The TE domain could catalyze lactonization at this step to yield 6-hydroxymellein as a derailment product. The polyesterification process maybe occurs when additional molecules of 3-hydroxybutyryl are transferred to tpeB. Following the first esterification step, an intramolecular cyclization catalyzed by the TE domain of tpeB would give talarodioxadione 1, whereas the ethyl esterification of talapolyester G perhaps happens spontaneously. Further oxidation by the cytochrome P450 monooxygenase tpeC then leads to the formation of oxidized derivatives. The polypeptide is Partially reducing polyketide synthase tpeA (Talaromyces stipitatus (strain ATCC 10500 / CBS 375.48 / QM 6759 / NRRL 1006) (Penicillium stipitatum)).